A 199-amino-acid chain; its full sequence is Recombination protein RecR (199 aa).

The segment at 58-73 (CVRCGNITNADLCGIC) adopts a C4-type zinc-finger fold. The region spanning 81 to 176 (GELCVVEDVA…QVTSLAQGVP (96 aa)) is the Toprim domain.

It belongs to the RecR family.

May play a role in DNA repair. It seems to be involved in an RecBC-independent recombinational process of DNA repair. It may act with RecF and RecO. The protein is Recombination protein RecR of Cereibacter sphaeroides (strain ATCC 17029 / ATH 2.4.9) (Rhodobacter sphaeroides).